Here is a 105-residue protein sequence, read N- to C-terminus: Pyrimidine/purine nucleoside phosphorylase (105 aa).

Belongs to the nucleoside phosphorylase PpnP family.

The enzyme catalyses a purine D-ribonucleoside + phosphate = a purine nucleobase + alpha-D-ribose 1-phosphate. The catalysed reaction is adenosine + phosphate = alpha-D-ribose 1-phosphate + adenine. It catalyses the reaction cytidine + phosphate = cytosine + alpha-D-ribose 1-phosphate. It carries out the reaction guanosine + phosphate = alpha-D-ribose 1-phosphate + guanine. The enzyme catalyses inosine + phosphate = alpha-D-ribose 1-phosphate + hypoxanthine. The catalysed reaction is thymidine + phosphate = 2-deoxy-alpha-D-ribose 1-phosphate + thymine. It catalyses the reaction uridine + phosphate = alpha-D-ribose 1-phosphate + uracil. It carries out the reaction xanthosine + phosphate = alpha-D-ribose 1-phosphate + xanthine. Its function is as follows. Catalyzes the phosphorolysis of diverse nucleosides, yielding D-ribose 1-phosphate and the respective free bases. Can use uridine, adenosine, guanosine, cytidine, thymidine, inosine and xanthosine as substrates. Also catalyzes the reverse reactions. In Cupriavidus pinatubonensis (strain JMP 134 / LMG 1197) (Cupriavidus necator (strain JMP 134)), this protein is Pyrimidine/purine nucleoside phosphorylase.